A 309-amino-acid chain; its full sequence is Taste receptor type 2 member 8 (309 aa).

The Extracellular segment spans residues 1–7; that stretch reads MFSPADN. The chain crosses the membrane as a helical span at residues 8-28; sequence IFIILITGEFILGILGNGYIA. The Cytoplasmic portion of the chain corresponds to 29-50; that stretch reads LVNWIDWIKKKKISTVDYILTN. The helical transmembrane segment at 51–71 threads the bilayer; sequence LVIARICLISVMVVNGIVIVL. At 72 to 82 the chain is on the extracellular side; that stretch reads NPDVYTKNKQQ. A helical transmembrane segment spans residues 83-103; that stretch reads IVIFTFWTFANYLNMWITTCL. Topologically, residues 104-131 are cytoplasmic; it reads NVFYFLKIASSSHPLFLWLKWKIDMVVH. The chain crosses the membrane as a helical span at residues 132-152; sequence WILLGCFAISLLVSLIAAIVL. Over 153–184 the chain is Extracellular; the sequence is SCDYRFHAIAKHKRNITEMFHVSKIPYFEPLT. N-linked (GlcNAc...) asparagine glycosylation occurs at N167. Residues 185 to 205 form a helical membrane-spanning segment; the sequence is LFNLFAIVPFIVSLISFFLLV. Residues 206–239 lie on the Cytoplasmic side of the membrane; sequence RSLWRHTKQIKLYATGSRDPSTEVHVRAIKTMTS. Residues 240–260 traverse the membrane as a helical segment; sequence FIFFFFLYYISSILMTFSYLM. The Extracellular portion of the chain corresponds to 261–266; it reads TKYKLA. A helical membrane pass occupies residues 267–287; the sequence is VEFGEIAAILYPLGHSLILIV. The Cytoplasmic portion of the chain corresponds to 288–309; that stretch reads LNNKLRQTFVRMLTCRKIACMI.

The protein belongs to the G-protein coupled receptor T2R family. Expressed in subsets of taste receptor cells of the tongue and palate epithelium and exclusively in gustducin-positive cells.

It is found in the membrane. Its function is as follows. Receptor that may play a role in the perception of bitterness and is gustducin-linked. May play a role in sensing the chemical composition of the gastrointestinal content. The activity of this receptor may stimulate alpha gustducin, mediate PLC-beta-2 activation and lead to the gating of TRPM5. This chain is Taste receptor type 2 member 8 (TAS2R8), found in Homo sapiens (Human).